The sequence spans 29 residues: Cytochrome b6-f complex subunit 8 (29 aa).

The helical transmembrane segment at 3 to 23 (IISLGWSSLLVVFTFSLSLVV) threads the bilayer.

The protein belongs to the PetN family. As to quaternary structure, the 4 large subunits of the cytochrome b6-f complex are cytochrome b6, subunit IV (17 kDa polypeptide, PetD), cytochrome f and the Rieske protein, while the 4 small subunits are PetG, PetL, PetM and PetN. The complex functions as a dimer.

Its subcellular location is the plastid. It is found in the chloroplast thylakoid membrane. Its function is as follows. Component of the cytochrome b6-f complex, which mediates electron transfer between photosystem II (PSII) and photosystem I (PSI), cyclic electron flow around PSI, and state transitions. This Rhodomonas salina (Cryptomonas salina) protein is Cytochrome b6-f complex subunit 8.